A 179-amino-acid polypeptide reads, in one-letter code: Probable inosine/xanthosine triphosphatase (179 aa).

13-18 (STNPVK) lines the substrate pocket. A Mg(2+)-binding site is contributed by Gln70.

Belongs to the YjjX NTPase family. In terms of assembly, homodimer. Mg(2+) serves as cofactor. The cofactor is Mn(2+).

The catalysed reaction is XTP + H2O = XDP + phosphate + H(+). It catalyses the reaction ITP + H2O = IDP + phosphate + H(+). Its function is as follows. Phosphatase that hydrolyzes non-canonical purine nucleotides such as XTP and ITP to their respective diphosphate derivatives. Probably excludes non-canonical purines from DNA/RNA precursor pool, thus preventing their incorporation into DNA/RNA and avoiding chromosomal lesions. The protein is Probable inosine/xanthosine triphosphatase of Methanocaldococcus jannaschii (strain ATCC 43067 / DSM 2661 / JAL-1 / JCM 10045 / NBRC 100440) (Methanococcus jannaschii).